The sequence spans 365 residues: MPEITVRAKSKTYPVYINEFALTDVKEQWTKSLAKYSHVFVLTDEHVANLHKAKLDAVLADLPVVTYYVAPNGEEAKTFRVYEDVMTKMIETGLDRKAVLIAFGGGVIGDLGGFVAATYMRGIPFYQVPTTVLAHDSAVGGKVAINHPLGKNMIGNFYQPEAVIYDTQFFATLPEREMRSGFAEMIKHALISDHALLTALMDTFTEPKDFYTKDLTPFLQRGIEIKANIVAQDETEQGVRAYLNFGHTFGHALEAYGNFGKWLHGEAITYGMIYALTMSETVYGLDFDLAKFTTWLERLGYNTTFDVTVPFSNILDNMRHDKKTTFNEISMVLLEDIGKPVIFKAEDELIFDTYKSVMRNGGDLF.

NAD(+) is bound by residues glycine 106–aspartate 110, threonine 130–threonine 131, lysine 142, lysine 151, and phenylalanine 169–threonine 172. Zn(2+) is bound by residues glutamate 184, histidine 247, and histidine 264.

Belongs to the sugar phosphate cyclases superfamily. Dehydroquinate synthase family. Requires NAD(+) as cofactor. Co(2+) serves as cofactor. It depends on Zn(2+) as a cofactor.

It localises to the cytoplasm. It carries out the reaction 7-phospho-2-dehydro-3-deoxy-D-arabino-heptonate = 3-dehydroquinate + phosphate. The protein operates within metabolic intermediate biosynthesis; chorismate biosynthesis; chorismate from D-erythrose 4-phosphate and phosphoenolpyruvate: step 2/7. Catalyzes the conversion of 3-deoxy-D-arabino-heptulosonate 7-phosphate (DAHP) to dehydroquinate (DHQ). The sequence is that of 3-dehydroquinate synthase from Listeria innocua serovar 6a (strain ATCC BAA-680 / CLIP 11262).